Here is a 920-residue protein sequence, read N- to C-terminus: Nonribosomal peptide synthetase atrA (920 aa).

The segment at 13-428 is adenylation (A) domain; that stretch reads AAAQERCGRV…AGRLKETMII (416 aa). One can recognise a Carrier domain in the interval 558 to 637; the sequence is PPKDELERSL…ELSAALHDLQ (80 aa). Position 595 is an O-(pantetheine 4'-phosphoryl)serine (Ser-595). A thioesterase (TE) domain region spans residues 656–905; that stretch reads PLWLIHPGVG…YTMLAPEHVF (250 aa).

It belongs to the NRP synthetase family.

It carries out the reaction 2 3-(4-hydroxyphenyl)pyruvate + 2 ATP = atromentin + 2 AMP + 2 diphosphate + H(+). Its function is as follows. Nonribosomal peptide synthetase that mediates the biosynthesis of atromentin. AtrA first activates 4-hydroxyphenylpyruvate (HPPA) through its A domain to AMP-HPPA. The HPPA unit is then loaded to the T domain and eventually transferred to the TE domain. Another HPPA unit is then loaded onto the T domain. The TE domain then catalyzes the condensation of the two HPPA units and the release of atromentin via cyclization. In Aspergillus terreus (strain NIH 2624 / FGSC A1156), this protein is Nonribosomal peptide synthetase atrA.